The chain runs to 953 residues: 2-oxoglutarate dehydrogenase E1 component (953 aa).

It belongs to the alpha-ketoglutarate dehydrogenase family. As to quaternary structure, homodimer. Part of the 2-oxoglutarate dehydrogenase (OGDH) complex composed of E1 (2-oxoglutarate dehydrogenase), E2 (dihydrolipoamide succinyltransferase) and E3 (dihydrolipoamide dehydrogenase); the complex contains multiple copies of the three enzymatic components (E1, E2 and E3). Thiamine diphosphate serves as cofactor.

It carries out the reaction N(6)-[(R)-lipoyl]-L-lysyl-[protein] + 2-oxoglutarate + H(+) = N(6)-[(R)-S(8)-succinyldihydrolipoyl]-L-lysyl-[protein] + CO2. Its function is as follows. E1 component of the 2-oxoglutarate dehydrogenase (OGDH) complex which catalyzes the decarboxylation of 2-oxoglutarate, the first step in the conversion of 2-oxoglutarate to succinyl-CoA and CO(2). This Oceanobacillus iheyensis (strain DSM 14371 / CIP 107618 / JCM 11309 / KCTC 3954 / HTE831) protein is 2-oxoglutarate dehydrogenase E1 component.